We begin with the raw amino-acid sequence, 170 residues long: Protein ripply3 (170 aa).

The WRPW motif signature appears at 40–43; it reads WRPW. Residues 51-61 show a composition bias toward basic and acidic residues; sequence ELDGQQRRSGE. The interval 51–78 is disordered; that stretch reads ELDGQQRRSGEADGVPTNTGPKGALGFQ. The interval 79 to 114 is ripply homology domain; it reads HPVRLYMPKSKTSEYLQHMGRKVLASFPVQATIHFY. Residues 142 to 155 show a composition bias toward polar residues; it reads GVDSSRGSSDNYSV. Residues 142 to 170 form a disordered region; it reads GVDSSRGSSDNYSVQGGPKRNIGSHAGSA.

The protein belongs to the ripply family. Interacts with tbx1 and tle4/grg4. At neurula stage, expressed in the region close to the heart mesoderm. At the tailbud stage, expressed in the pharyngeal region.

Its subcellular location is the nucleus. Acts as a transcriptional corepressor. Negative regulator of the transcriptional activity of tbx1 that plays a key role in pharyngeal development. Plays a role in the formation of the anteroposterior (AP) axis during embryonic development; required to establish the posterolateral border of the pre-placodal ectoderm (PPE) acting downstream of the retinoic acid receptor (RAR) signaling. This chain is Protein ripply3 (ripply3), found in Xenopus laevis (African clawed frog).